The following is a 408-amino-acid chain: Putative mannan endo-1,4-beta-mannosidase 4 (408 aa).

Residues 1–23 (MKCLCFIVLLAIVIAQSYVGVEA) form the signal peptide. Asn-73 carries N-linked (GlcNAc...) asparagine glycosylation. Substrate contacts are provided by Trp-85 and Asn-201. Catalysis depends on Glu-202, which acts as the Proton donor. The active-site Nucleophile is Glu-322. Trp-364 is a substrate binding site.

Belongs to the glycosyl hydrolase 5 (cellulase A) family.

It is found in the secreted. It catalyses the reaction Random hydrolysis of (1-&gt;4)-beta-D-mannosidic linkages in mannans, galactomannans and glucomannans.. This chain is Putative mannan endo-1,4-beta-mannosidase 4 (MAN4), found in Arabidopsis thaliana (Mouse-ear cress).